Consider the following 65-residue polypeptide: Large ribosomal subunit protein uL29 (65 aa).

Belongs to the universal ribosomal protein uL29 family.

This is Large ribosomal subunit protein uL29 from Lactobacillus acidophilus (strain ATCC 700396 / NCK56 / N2 / NCFM).